A 301-amino-acid polypeptide reads, in one-letter code: Acetyl-coenzyme A carboxylase carboxyl transferase subunit beta (301 aa).

A CoA carboxyltransferase N-terminal domain is found at 25–294 (LWIKDPSTGE…NSDAPEHEKT (270 aa)). Residues 282–301 (QPGNSDAPEHEKTEATDKAA) are disordered. Positions 288–301 (APEHEKTEATDKAA) are enriched in basic and acidic residues.

It belongs to the AccD/PCCB family. As to quaternary structure, acetyl-CoA carboxylase is a heterohexamer composed of biotin carboxyl carrier protein (AccB), biotin carboxylase (AccC) and two subunits each of ACCase subunit alpha (AccA) and ACCase subunit beta (AccD).

The protein resides in the cytoplasm. It catalyses the reaction N(6)-carboxybiotinyl-L-lysyl-[protein] + acetyl-CoA = N(6)-biotinyl-L-lysyl-[protein] + malonyl-CoA. The protein operates within lipid metabolism; malonyl-CoA biosynthesis; malonyl-CoA from acetyl-CoA: step 1/1. In terms of biological role, component of the acetyl coenzyme A carboxylase (ACC) complex. Biotin carboxylase (BC) catalyzes the carboxylation of biotin on its carrier protein (BCCP) and then the CO(2) group is transferred by the transcarboxylase to acetyl-CoA to form malonyl-CoA. The chain is Acetyl-coenzyme A carboxylase carboxyl transferase subunit beta from Brucella anthropi (strain ATCC 49188 / DSM 6882 / CCUG 24695 / JCM 21032 / LMG 3331 / NBRC 15819 / NCTC 12168 / Alc 37) (Ochrobactrum anthropi).